Consider the following 240-residue polypeptide: Glutamine amidotransferase-like protein chry6 (240 aa).

The Glutamine amidotransferase type-1 domain maps to 13–205 (NFILDDTGGR…FVASDNPVLV (193 aa)). The active-site Nucleophile is cysteine 102. Residues histidine 185 and glutamate 187 contribute to the active site.

The protein belongs to the peptidase C26 family.

It functions in the pathway pigment biosynthesis. In terms of biological role, glutamine amidotransferase-like protein; part of the gene cluster that mediates the biosynthesis of the yellow pigment chrysogine. Pyruvic acid and anthranilic acid are likely substrates for the nonribosomal peptide synthetase chry1/NRPS14, with pyruvic acid adenylated by the first A domain and anthranilic acid by the second. If pyruvic acid and anthranilic acid are merged and released from chry1/NRPS14 by hydrolysis, a subsequent amidation would lead to 2-pyruvoylaminobenzamide. This process is probably catalyzed by the amidotransferase chry2 using glutamine as amino donor. The dehydrogenase chry5 that has a terminal berberine bridge domain for C-N cyclization could catalyze the cyclization of 2-pyruvoylaminobenzamide to yield acetyl-4(3H)-quinazolidinone. A final reduction of acetyl-4(3H)-quinazolidinone catalyzed by the oxidoreductase chry4 would result in chrysogine. This chain is Glutamine amidotransferase-like protein chry6, found in Gibberella zeae (strain ATCC MYA-4620 / CBS 123657 / FGSC 9075 / NRRL 31084 / PH-1) (Wheat head blight fungus).